The primary structure comprises 234 residues: Adenosine 5'-phosphosulfate reductase (234 aa).

The [4Fe-4S] cluster site is built by C120, C121, C203, and C206. C229 functions as the Nucleophile; cysteine thiosulfonate intermediate in the catalytic mechanism.

Belongs to the PAPS reductase family. CysH subfamily. It depends on [4Fe-4S] cluster as a cofactor.

Its subcellular location is the cytoplasm. It catalyses the reaction [thioredoxin]-disulfide + sulfite + AMP + 2 H(+) = adenosine 5'-phosphosulfate + [thioredoxin]-dithiol. Its pathway is sulfur metabolism; hydrogen sulfide biosynthesis; sulfite from sulfate. Its function is as follows. Catalyzes the formation of sulfite from adenosine 5'-phosphosulfate (APS) using thioredoxin as an electron donor. In Bacillus thuringiensis (strain Al Hakam), this protein is Adenosine 5'-phosphosulfate reductase.